A 129-amino-acid chain; its full sequence is Small ribosomal subunit protein uS11 (129 aa).

Belongs to the universal ribosomal protein uS11 family. As to quaternary structure, part of the 30S ribosomal subunit. Interacts with proteins S7 and S18. Binds to IF-3.

Functionally, located on the platform of the 30S subunit, it bridges several disparate RNA helices of the 16S rRNA. Forms part of the Shine-Dalgarno cleft in the 70S ribosome. The chain is Small ribosomal subunit protein uS11 from Sphingopyxis alaskensis (strain DSM 13593 / LMG 18877 / RB2256) (Sphingomonas alaskensis).